A 155-amino-acid polypeptide reads, in one-letter code: Small ribosomal subunit protein uS7cz/uS7cy (155 aa).

The protein belongs to the universal ribosomal protein uS7 family. As to quaternary structure, part of the 30S ribosomal subunit.

Its subcellular location is the plastid. The protein resides in the chloroplast. In terms of biological role, one of the primary rRNA binding proteins, it binds directly to 16S rRNA where it nucleates assembly of the head domain of the 30S subunit. This chain is Small ribosomal subunit protein uS7cz/uS7cy (rps7-A), found in Phalaenopsis aphrodite subsp. formosana (Moth orchid).